A 462-amino-acid polypeptide reads, in one-letter code: NEDD8-activating enzyme E1 catalytic subunit (462 aa).

An N-acetylalanine modification is found at Ala-2. The interval 53-70 (HPDFEPSTESLQFLLDTC) is interaction with UBE2M N-terminus. ATP is bound by residues 100 to 124 (DMDTIDVSNLNRQFLFRPKDVGRPK) and 148 to 171 (IQDFNDTFYRQFHIIVCGLDSIIA). Interaction with UBE2M N-terminus stretches follow at residues 157 to 161 (RQFHI) and 192 to 217 (PSSIVPLIDGGTEGFKGNARVILPGM). Residues 227–229 (LYP) are interaction with NEDD8. Cys-237 serves as the catalytic Glycyl thioester intermediate. Interaction with NAE1 regions lie at residues 242–248 (MPRLPEH) and 292–295 (YNIR). The interval 331–338 (IATSAYIP) is interaction with UBE2M N-terminus. The tract at residues 352 to 357 (YTYTFE) is interaction with NEDD8. An interaction with UBE2M core domain region spans residues 368-462 (SQLPQNIQFS…QTVLFKLHFT (95 aa)).

This sequence belongs to the ubiquitin-activating E1 family. UBA3 subfamily. As to quaternary structure, heterodimer of UBA3 and NAE1. Interacts with NEDD8, UBE2F and UBE2M. Binds ESR1 and ESR2 with bound steroid ligand. Interacts with TBATA.

The enzyme catalyses ATP + [NEDD8 protein] + [E1 NEDD8-activating enzyme]-L-cysteine = AMP + diphosphate + [E1 NEDD8-activating enzyme]-S-[NEDD8 protein]-yl-L-cysteine.. It functions in the pathway protein modification; protein neddylation. With respect to regulation, binding of TP53BP2 to the regulatory subunit NAE1 decreases activity. Catalytic subunit of the dimeric UBA3-NAE1 E1 enzyme. E1 activates NEDD8 by first adenylating its C-terminal glycine residue with ATP, thereafter linking this residue to the side chain of the catalytic cysteine, yielding a NEDD8-UBA3 thioester and free AMP. E1 finally transfers NEDD8 to the catalytic cysteine of UBE2M. Down-regulates steroid receptor activity. Necessary for cell cycle progression. The protein is NEDD8-activating enzyme E1 catalytic subunit (Uba3) of Mus musculus (Mouse).